A 376-amino-acid chain; its full sequence is Putative dihydroorotase (376 aa).

2 residues coordinate Zn(2+): His35 and His37. Residues 37–39 and Asn66 contribute to the substrate site; that span reads HVR. Zn(2+)-binding residues include Asp114, His138, and His187. Residue Asn230 coordinates substrate. Asp257 contacts Zn(2+). Asp257 is an active-site residue. Residues His261 and 273-274 each bind substrate; that span reads YG.

Belongs to the metallo-dependent hydrolases superfamily. DHOase family. Class I DHOase subfamily. Zn(2+) is required as a cofactor.

The enzyme catalyses (S)-dihydroorotate + H2O = N-carbamoyl-L-aspartate + H(+). It participates in pyrimidine metabolism; UMP biosynthesis via de novo pathway; (S)-dihydroorotate from bicarbonate: step 3/3. Its function is as follows. Catalyzes the reversible cyclization of carbamoyl aspartate to dihydroorotate. The protein is Putative dihydroorotase (pyrC) of Thermotoga maritima (strain ATCC 43589 / DSM 3109 / JCM 10099 / NBRC 100826 / MSB8).